The sequence spans 1848 residues: Autophagy-related protein 2 (1848 aa).

Disordered stretches follow at residues 129 to 168 (DSDSAAEDESDDTDEEIVVEPKKSRSSSSSSFSGSTSKPS), 237 to 274 (PGELVEKVVQSPQKDDTSDNEEDDSNYEDDNNDYGDES), 386 to 417 (LKRQQNSRFPQYAETTDELTDDEASSKDGENT), 494 to 540 (TAAT…GSKS), and 1717 to 1737 (DDNSKKEGEEDEADDSSADEE). Residues 132 to 146 (SAAEDESDDTDEEIV) are compositionally biased toward acidic residues. Over residues 154-168 (SSSSSSFSGSTSKPS) the composition is skewed to low complexity. The span at 254–274 (SDNEEDDSNYEDDNNDYGDES) shows a compositional bias: acidic residues. Over residues 494 to 507 (TAATHAEQSQSQPD) the composition is skewed to polar residues. A compositionally biased stretch (low complexity) spans 525 to 540 (MSPSSISSMSSSGSKS). The segment covering 1725 to 1737 (EEDEADDSSADEE) has biased composition (acidic residues).

It belongs to the ATG2 family.

The protein resides in the preautophagosomal structure membrane. It is found in the endoplasmic reticulum membrane. It carries out the reaction a 1,2-diacyl-sn-glycero-3-phosphocholine(in) = a 1,2-diacyl-sn-glycero-3-phosphocholine(out). The enzyme catalyses a 1,2-diacyl-sn-glycero-3-phospho-L-serine(in) = a 1,2-diacyl-sn-glycero-3-phospho-L-serine(out). The catalysed reaction is a 1,2-diacyl-sn-glycero-3-phosphoethanolamine(in) = a 1,2-diacyl-sn-glycero-3-phosphoethanolamine(out). Lipid transfer protein required for autophagosome completion and peroxisome degradation. Tethers the edge of the isolation membrane (IM) to the endoplasmic reticulum (ER) and mediates direct lipid transfer from ER to IM for IM expansion. ATG2 binds to the ER exit site (ERES), which is the membrane source for autophagosome formation, using basic residues in its N-terminal region (NR) and to the expanding edge of the IM through its C-terminal region. The latter binding is assisted by an ATG18-PtdIns3P interaction. ATG2 then extracts phospholipids from the membrane source using its NR and transfers them to ATG9 to the IM through its predicted beta-sheet-rich structure for membrane expansion. The chain is Autophagy-related protein 2 (ATG2) from Scheffersomyces stipitis (strain ATCC 58785 / CBS 6054 / NBRC 10063 / NRRL Y-11545) (Yeast).